The following is a 563-amino-acid chain: Arginine--tRNA ligase (563 aa).

The 'HIGH' region motif lies at 121 to 131 (PNIAKPFSIGH).

Belongs to the class-I aminoacyl-tRNA synthetase family. As to quaternary structure, monomer.

It localises to the cytoplasm. It catalyses the reaction tRNA(Arg) + L-arginine + ATP = L-arginyl-tRNA(Arg) + AMP + diphosphate. This Streptococcus pneumoniae (strain ATCC BAA-255 / R6) protein is Arginine--tRNA ligase.